A 752-amino-acid chain; its full sequence is Complement C2 (752 aa).

The first 20 residues, 1–20 (MGPLMVLFCLLFLYPGLADS), serve as a signal peptide directing secretion. 3 Sushi domains span residues 22–86 (PSCP…VCKP), 87–146 (VRCP…VCDN), and 149–206 (GHCP…ICRQ). Cystine bridges form between cysteine 24/cysteine 64, cysteine 51/cysteine 84, cysteine 89/cysteine 131, cysteine 117/cysteine 144, cysteine 151/cysteine 191, and cysteine 177/cysteine 204. A glycan (N-linked (GlcNAc...) asparagine) is linked at asparagine 29. Asparagine 112 carries an N-linked (GlcNAc...) asparagine glycan. Positions 254–452 (NLYLLLDCSQ…KALHQVFEHM (199 aa)) constitute a VWFA domain. The short motif at 260-264 (DCSQS) is the MIDAS-like motif element. Positions 262 and 264 each coordinate Mg(2+). N-linked (GlcNAc...) asparagine glycans are attached at residues asparagine 290 and asparagine 333. Threonine 337 contributes to the Mg(2+) binding site. Cystine bridges form between cysteine 463/cysteine 581, cysteine 492/cysteine 508, and cysteine 584/cysteine 600. In terms of domain architecture, Peptidase S1 spans 464–744 (GVGNMSANAS…MQPWLRQHLG (281 aa)). N-linked (GlcNAc...) asparagine glycans are attached at residues asparagine 467 and asparagine 471. Active-site charge relay system residues include histidine 507 and aspartate 561. 2 N-linked (GlcNAc...) asparagine glycosylation sites follow: asparagine 621 and asparagine 651. 2 disulfides stabilise this stretch: cysteine 638-cysteine 665 and cysteine 675-cysteine 705. The Charge relay system role is filled by serine 679.

This sequence belongs to the peptidase S1 family. As to quaternary structure, serine protease component of the C3 convertase, also named C4bC2b, composed of the serine protease complement C2b and complement C4b. Serine protease component of the C5 convertase, also named C4bC2bC3b, composed of the serine protease complement C2b, complement C3b, as well as complement C4b. Requires Mg(2+) as cofactor. It depends on Mn(2+) as a cofactor. Post-translationally, cleaved and activated by different proteases depending on the complement pathway to generate complement C2a and serine protease complement C2b chains. Cleaved and activated by C1S following activation by the classical complement system. Cleaved and activated by MASP2 following activation by the lectin complement system. Cleaved and activated by GZMK following activation by the GZMK complement system.

The protein localises to the secreted. The protein resides in the cell surface. The catalysed reaction is Selective cleavage of Arg-|-Ser bond in complement component C3 alpha-chain to form C3a and C3b, and Arg-|-Xaa bond in complement component C5 alpha-chain to form C5a and C5b.. Precursor of the catalytic component of the C3 and C5 convertase complexes, which are part of the complement pathway, a cascade of proteins that leads to phagocytosis and breakdown of pathogens and signaling that strengthens the adaptive immune system. Component C2 is part of the classical, lectin and GZMK complement systems. Its function is as follows. Catalytic component of the complement C3 and C5 convertase complexes. Following complement activation, recruited to the surface of pathogens by complement C4b opsonin to form the C3 convertase, or C3b and C4b opsonins to form the C5 convertase. As part of the C3 convertase, cleaves and activate C3 into C3a anaphylatoxin and C3b opsonin, the next components of the complement pathways. As part of the C5 convertase, cleaves and activate C5 into C5a anaphylatoxin and C5b component of the membrane attack complex. The protein is Complement C2 of Pan troglodytes (Chimpanzee).